We begin with the raw amino-acid sequence, 74 residues long: uncharacterized protein (74 aa).

A helical transmembrane segment spans residues 15–32; it reads FLHALTVTFLSDIFVWLV.

The protein resides in the membrane. This is an uncharacterized protein from Saccharomyces cerevisiae (strain ATCC 204508 / S288c) (Baker's yeast).